The chain runs to 347 residues: Protein RecA (347 aa).

Gly-66–Thr-73 lines the ATP pocket.

This sequence belongs to the RecA family.

The protein resides in the cytoplasm. In terms of biological role, can catalyze the hydrolysis of ATP in the presence of single-stranded DNA, the ATP-dependent uptake of single-stranded DNA by duplex DNA, and the ATP-dependent hybridization of homologous single-stranded DNAs. It interacts with LexA causing its activation and leading to its autocatalytic cleavage. In Burkholderia cepacia (Pseudomonas cepacia), this protein is Protein RecA.